The chain runs to 131 residues: L-aspartate semialdehyde sulfurtransferase iron-sulfur subunit (131 aa).

4Fe-4S ferredoxin-type domains lie at 73-102 (KVIK…MDED) and 103-131 (YNVV…EIFE). Positions 82, 85, 88, 92, 112, 115, 118, and 122 each coordinate [4Fe-4S] cluster.

As to quaternary structure, may form a complex with MJ0100. [4Fe-4S] cluster is required as a cofactor.

The protein operates within amino-acid biosynthesis. Functionally, required for O-acetylhomoserine sulfhydrylase (OAHS)-independent homocysteine (Hcy) biosynthesis. Together with MJ0100, catalyzes the condensation of sulfide with aspartate semialdehyde to generate homocysteine. May be involved in the reduction of the disulfide formed in MJ0100. The sequence is that of L-aspartate semialdehyde sulfurtransferase iron-sulfur subunit from Methanocaldococcus jannaschii (strain ATCC 43067 / DSM 2661 / JAL-1 / JCM 10045 / NBRC 100440) (Methanococcus jannaschii).